The sequence spans 148 residues: Gametocyte-specific factor 1-like (148 aa).

2 consecutive CHHC U11-48K-type zinc fingers follow at residues 6 to 33 and 40 to 67; these read FEICPYDPHHRIPLSRFQYHLASCRRKN and MATCKYNACHVVPIKNLEEHEAVCVNRS. The Zn(2+) site is built by Cys9, His15, His25, Cys29, Cys43, His49, His59, and Cys63. The disordered stretch occupies residues 67–99; it reads SAVEEEDTENPLKVSPPSSEQNDDTQQVSPCLP. The segment covering 82-95 has biased composition (polar residues); it reads PPSSEQNDDTQQVS.

Belongs to the UPF0224 (FAM112) family.

In Homo sapiens (Human), this protein is Gametocyte-specific factor 1-like (GTSF1L).